A 301-amino-acid polypeptide reads, in one-letter code: Phosphoribosylaminoimidazole-succinocarboxamide synthase (301 aa).

The protein belongs to the SAICAR synthetase family.

It carries out the reaction 5-amino-1-(5-phospho-D-ribosyl)imidazole-4-carboxylate + L-aspartate + ATP = (2S)-2-[5-amino-1-(5-phospho-beta-D-ribosyl)imidazole-4-carboxamido]succinate + ADP + phosphate + 2 H(+). Its pathway is purine metabolism; IMP biosynthesis via de novo pathway; 5-amino-1-(5-phospho-D-ribosyl)imidazole-4-carboxamide from 5-amino-1-(5-phospho-D-ribosyl)imidazole-4-carboxylate: step 1/2. The chain is Phosphoribosylaminoimidazole-succinocarboxamide synthase from Syntrophobacter fumaroxidans (strain DSM 10017 / MPOB).